Consider the following 226-residue polypeptide: Uracil-DNA glycosylase (226 aa).

Aspartate 64 acts as the Proton acceptor in catalysis.

It belongs to the uracil-DNA glycosylase (UDG) superfamily. UNG family.

Its subcellular location is the cytoplasm. It carries out the reaction Hydrolyzes single-stranded DNA or mismatched double-stranded DNA and polynucleotides, releasing free uracil.. Excises uracil residues from the DNA which can arise as a result of misincorporation of dUMP residues by DNA polymerase or due to deamination of cytosine. This is Uracil-DNA glycosylase from Proteus mirabilis (strain HI4320).